A 242-amino-acid chain; its full sequence is Probable septum site-determining protein MinC (242 aa).

The protein belongs to the MinC family. As to quaternary structure, interacts with MinD and FtsZ.

Its function is as follows. Cell division inhibitor that blocks the formation of polar Z ring septums. Rapidly oscillates between the poles of the cell to destabilize FtsZ filaments that have formed before they mature into polar Z rings. Prevents FtsZ polymerization. The protein is Probable septum site-determining protein MinC of Agrobacterium fabrum (strain C58 / ATCC 33970) (Agrobacterium tumefaciens (strain C58)).